Reading from the N-terminus, the 694-residue chain is Elongation factor G (694 aa).

The region spanning 8 to 287 (EDYRNFGIMA…AVVEFLPAPT (280 aa)) is the tr-type G domain. Residues 17-24 (AHIDAGKT), 86-90 (DTPGH), and 140-143 (NKMD) contribute to the GTP site.

It belongs to the TRAFAC class translation factor GTPase superfamily. Classic translation factor GTPase family. EF-G/EF-2 subfamily.

It localises to the cytoplasm. Functionally, catalyzes the GTP-dependent ribosomal translocation step during translation elongation. During this step, the ribosome changes from the pre-translocational (PRE) to the post-translocational (POST) state as the newly formed A-site-bound peptidyl-tRNA and P-site-bound deacylated tRNA move to the P and E sites, respectively. Catalyzes the coordinated movement of the two tRNA molecules, the mRNA and conformational changes in the ribosome. The protein is Elongation factor G of Brucella melitensis biotype 2 (strain ATCC 23457).